A 263-amino-acid chain; its full sequence is MNRRRRIYEGKAKILYEGPEPGTLIQFFKDDATAFNKKKHEVVDGKGVLNNRISEYIFEHLNRIGIPTHFIRRLNMREQLIKEVEIVPLEIVVRNIAAGSLAKRLGIEEGTVLPRSIIEFYYKADALDDPMVSEEHITAFGWASPQEIDDIMALSIRVNDFLTGLFLGVGIQLVDFKIECGRLWEGDMMRIVVADEISPDSCRLWDINTRDKLDKDRFRRDMGGLVEAYQEVARRLGIMNENEPPKPAGPVLVSSKPDGETRH.

The interval 239–263 (MNENEPPKPAGPVLVSSKPDGETRH) is disordered.

Belongs to the SAICAR synthetase family.

The enzyme catalyses 5-amino-1-(5-phospho-D-ribosyl)imidazole-4-carboxylate + L-aspartate + ATP = (2S)-2-[5-amino-1-(5-phospho-beta-D-ribosyl)imidazole-4-carboxamido]succinate + ADP + phosphate + 2 H(+). It participates in purine metabolism; IMP biosynthesis via de novo pathway; 5-amino-1-(5-phospho-D-ribosyl)imidazole-4-carboxamide from 5-amino-1-(5-phospho-D-ribosyl)imidazole-4-carboxylate: step 1/2. The polypeptide is Phosphoribosylaminoimidazole-succinocarboxamide synthase (Chelativorans sp. (strain BNC1)).